Here is a 453-residue protein sequence, read N- to C-terminus: Ribosomal protein uS12 methylthiotransferase RimO (453 aa).

Residues 5 to 120 enclose the MTTase N-terminal domain; it reads PKVGFVSLGC…VMQAVHSHLP (116 aa). 6 residues coordinate [4Fe-4S] cluster: C14, C50, C79, C151, C155, and C158. Positions 137-382 constitute a Radical SAM core domain; that stretch reads LTPRHYAYLK…MEVAEEVSAN (246 aa). The region spanning 385–453 is the TRAM domain; that stretch reads QRKVGKTLKV…ADGHDLWGEV (69 aa).

The protein belongs to the methylthiotransferase family. RimO subfamily. [4Fe-4S] cluster is required as a cofactor.

It is found in the cytoplasm. It carries out the reaction L-aspartate(89)-[ribosomal protein uS12]-hydrogen + (sulfur carrier)-SH + AH2 + 2 S-adenosyl-L-methionine = 3-methylsulfanyl-L-aspartate(89)-[ribosomal protein uS12]-hydrogen + (sulfur carrier)-H + 5'-deoxyadenosine + L-methionine + A + S-adenosyl-L-homocysteine + 2 H(+). Its function is as follows. Catalyzes the methylthiolation of an aspartic acid residue of ribosomal protein uS12. This is Ribosomal protein uS12 methylthiotransferase RimO from Burkholderia lata (strain ATCC 17760 / DSM 23089 / LMG 22485 / NCIMB 9086 / R18194 / 383).